A 242-amino-acid chain; its full sequence is ATP-dependent dethiobiotin synthetase BioD 1 (242 aa).

12–17 (NVGKTT) contacts ATP. Thr-16 lines the Mg(2+) pocket. The active site involves Lys-37. Residue Asp-66 participates in ATP binding. 2 residues coordinate Mg(2+): Asp-66 and Glu-124. Residues 184–185 (NR), 213–215 (PYL), and Glu-220 contribute to the ATP site.

This sequence belongs to the dethiobiotin synthetase family. As to quaternary structure, homodimer. Requires Mg(2+) as cofactor.

Its subcellular location is the cytoplasm. The catalysed reaction is (7R,8S)-7,8-diammoniononanoate + CO2 + ATP = (4R,5S)-dethiobiotin + ADP + phosphate + 3 H(+). It functions in the pathway cofactor biosynthesis; biotin biosynthesis; biotin from 7,8-diaminononanoate: step 1/2. In terms of biological role, catalyzes a mechanistically unusual reaction, the ATP-dependent insertion of CO2 between the N7 and N8 nitrogen atoms of 7,8-diaminopelargonic acid (DAPA, also called 7,8-diammoniononanoate) to form a ureido ring. This is ATP-dependent dethiobiotin synthetase BioD 1 from Haemophilus influenzae (strain ATCC 51907 / DSM 11121 / KW20 / Rd).